The following is a 430-amino-acid chain: Tyrosine--tRNA ligase (430 aa).

Tyrosine 36 lines the L-tyrosine pocket. Positions 41–50 match the 'HIGH' region motif; it reads PTASSLHVGS. Tyrosine 170 and glutamine 174 together coordinate L-tyrosine. The 'KMSKS' region motif lies at 230-234; sequence KMGKT. Lysine 233 contacts ATP. One can recognise an S4 RNA-binding domain in the interval 362–427; that stretch reads VPAFELFDEI…GKKNYHRLVL (66 aa).

This sequence belongs to the class-I aminoacyl-tRNA synthetase family. TyrS type 1 subfamily. As to quaternary structure, homodimer.

The protein localises to the cytoplasm. The enzyme catalyses tRNA(Tyr) + L-tyrosine + ATP = L-tyrosyl-tRNA(Tyr) + AMP + diphosphate + H(+). In terms of biological role, catalyzes the attachment of tyrosine to tRNA(Tyr) in a two-step reaction: tyrosine is first activated by ATP to form Tyr-AMP and then transferred to the acceptor end of tRNA(Tyr). This chain is Tyrosine--tRNA ligase, found in Desulfatibacillum aliphaticivorans.